A 266-amino-acid polypeptide reads, in one-letter code: Small ribosomal subunit protein uS2 (266 aa).

The segment at Ala-233–Glu-266 is disordered. Residues Lys-248–Lys-258 show a composition bias toward basic residues.

This sequence belongs to the universal ribosomal protein uS2 family.

This chain is Small ribosomal subunit protein uS2, found in Xylella fastidiosa (strain M23).